Here is a 487-residue protein sequence, read N- to C-terminus: Argininosuccinate lyase (487 aa).

It belongs to the lyase 1 family. Argininosuccinate lyase subfamily.

It is found in the cytoplasm. The catalysed reaction is 2-(N(omega)-L-arginino)succinate = fumarate + L-arginine. The protein operates within amino-acid biosynthesis; L-arginine biosynthesis; L-arginine from L-ornithine and carbamoyl phosphate: step 3/3. This is Argininosuccinate lyase from Natranaerobius thermophilus (strain ATCC BAA-1301 / DSM 18059 / JW/NM-WN-LF).